The sequence spans 251 residues: Fibroblast growth factor 23 (251 aa).

Residues 1-24 (MLGTCLRLLVGVLCTVCSLGTARA) form the signal peptide. A disulfide bridge connects residues Cys95 and Cys113. 2 O-linked (GalNAc) threonine glycosylation sites follow: Thr171 and Thr178. Positions 175-251 (RRHTRSAEDP…DRCRPFPRFV (77 aa)) are disordered. Residues 179–189 (RSAEDPPERDP) show a composition bias toward basic and acidic residues. Ser180 carries the phosphoserine; by FAM20C modification.

It belongs to the heparin-binding growth factors family. In terms of assembly, interacts with FGFR1. Interacts with FGFR2, FGFR3 and FGFR4. Affinity between fibroblast growth factors (FGFs) and their receptors is increased by KL and heparan sulfate glycosaminoglycans that function as coreceptors. In terms of processing, following secretion this protein is inactivated by cleavage into a N-terminal fragment and a C-terminal fragment. The processing is effected by proprotein convertases. Post-translationally, O-glycosylated at Thr-171 and Thr-178 by GALNT3 and glycosylation of Thr-178 requires previous glycosylation at Thr171. Glycosylation is necessary for secretion; it blocks processing by proprotein convertases when the O-glycan is alpha 2,6-sialylated. Competition between proprotein convertase cleavage and block of cleavage by O-glycosylation determines the level of secreted active FGF23. Phosphorylation at Ser-180 mediated by FAM20C slows down glycosylation at Thr-178 notably. Mainly expressed in the brain and thymus at low levels. In brain; preferentially expressed in the ventrolateral thalamic nucleus.

It is found in the secreted. Its function is as follows. Regulator of phosphate homeostasis. Inhibits renal tubular phosphate transport by reducing SLC34A1 levels. Acts directly on the parathyroid to decrease PTH secretion. Regulator of vitamin-D metabolism. Negatively regulates osteoblasts differentiation and matrix mineralization. Up-regulates EGR1 expression in the presence of KL. This chain is Fibroblast growth factor 23 (Fgf23), found in Mus musculus (Mouse).